Here is a 397-residue protein sequence, read N- to C-terminus: Imidazolonepropionase (397 aa).

The Fe(3+) site is built by His66 and His68. The Zn(2+) site is built by His66 and His68. Arg75, Tyr138, and His171 together coordinate 4-imidazolone-5-propanoate. Residue Tyr138 coordinates N-formimidoyl-L-glutamate. Position 236 (His236) interacts with Fe(3+). His236 is a binding site for Zn(2+). Gln239 is a 4-imidazolone-5-propanoate binding site. Position 311 (Asp311) interacts with Fe(3+). Residue Asp311 participates in Zn(2+) binding. Residues Asn313 and Gly315 each coordinate N-formimidoyl-L-glutamate. Residue Ser316 participates in 4-imidazolone-5-propanoate binding.

This sequence belongs to the metallo-dependent hydrolases superfamily. HutI family. Zn(2+) serves as cofactor. Fe(3+) is required as a cofactor.

The protein resides in the cytoplasm. It carries out the reaction 4-imidazolone-5-propanoate + H2O = N-formimidoyl-L-glutamate. It functions in the pathway amino-acid degradation; L-histidine degradation into L-glutamate; N-formimidoyl-L-glutamate from L-histidine: step 3/3. Catalyzes the hydrolytic cleavage of the carbon-nitrogen bond in imidazolone-5-propanoate to yield N-formimidoyl-L-glutamate. It is the third step in the universal histidine degradation pathway. The chain is Imidazolonepropionase from Roseobacter denitrificans (strain ATCC 33942 / OCh 114) (Erythrobacter sp. (strain OCh 114)).